Reading from the N-terminus, the 490-residue chain is Putative alanine aminotransferase (490 aa).

Residues Ala157, Ser158, Tyr183, Asn239, and Ser308 each contribute to the pyridoxal 5'-phosphate site. Lys311 carries the N6-(pyridoxal phosphate)lysine modification. Position 320 (Arg320) interacts with pyridoxal 5'-phosphate.

The protein belongs to the class-I pyridoxal-phosphate-dependent aminotransferase family. Alanine aminotransferase subfamily. In terms of assembly, homodimer. Pyridoxal 5'-phosphate is required as a cofactor.

It is found in the cytoplasm. Its subcellular location is the mitochondrion. The catalysed reaction is L-alanine + 2-oxoglutarate = pyruvate + L-glutamate. It functions in the pathway amino-acid degradation; L-alanine degradation via transaminase pathway; pyruvate from L-alanine: step 1/1. Alanine aminotransferase involved in both alanine biosynthesis and utilization. This is Putative alanine aminotransferase (alt1) from Schizosaccharomyces pombe (strain 972 / ATCC 24843) (Fission yeast).